An 88-amino-acid polypeptide reads, in one-letter code: Small ribosomal subunit protein bS16 (88 aa).

It belongs to the bacterial ribosomal protein bS16 family.

In Symbiobacterium thermophilum (strain DSM 24528 / JCM 14929 / IAM 14863 / T), this protein is Small ribosomal subunit protein bS16.